The sequence spans 1896 residues: Trinucleotide repeat-containing gene 6A protein (1896 aa).

Basic and acidic residues-rich tracts occupy residues M1 to V21 and K39 to E57. 4 disordered regions span residues M1–R137, S159–T209, E222–E250, and A257–S276. Positions M1–L917 are interaction with argonaute family proteins. Low complexity-rich tracts occupy residues A69 to Q93 and Q101 to Q113. Over residues R125–R137 the composition is skewed to basic residues. Positions I239–S488 are sufficient for interaction with AGO1, AGO3 and AGO4. Sufficient for interaction with AGO2 regions lie at residues V255–G331, G303–G384, N325–F424, S394–A480, and T487–E736. 2 stretches are compositionally biased toward polar residues: residues V396–E410 and S417–Q429. 5 disordered regions span residues V396 to P461, F548 to I683, L703 to K998, I1011 to W1126, and Q1143 to E1182. Residues N430–N443 are compositionally biased toward low complexity. Residues F444–P461 are compositionally biased toward polar residues. The sufficient for interaction with AGO1 and AGO4 stretch occupies residues N551–Q1279. The span at S573 to R584 shows a compositional bias: gly residues. 2 stretches are compositionally biased toward polar residues: residues Q591 to G617 and G635 to V647. Over residues G665–I683 the composition is skewed to basic and acidic residues. Polar residues predominate over residues L703–E722. The span at T723–N733 shows a compositional bias: basic and acidic residues. S724 carries the post-translational modification Phosphoserine. Over residues W738–S766 the composition is skewed to polar residues. Residues S858 to G871 show a composition bias toward low complexity. Phosphoserine is present on S863. Composition is skewed to polar residues over residues G876 to G906 and K924 to I937. S976 carries the post-translational modification Phosphoserine. Polar residues-rich tracts occupy residues A1033 to G1042, T1054 to S1064, and A1082 to K1105. The segment at V1059 to E1129 is sufficient for interaction with AGO2. A compositionally biased stretch (low complexity) spans Q1143 to L1163. A phosphoserine mark is found at S1197 and S1255. 3 disordered regions span residues G1234–M1256, V1273–L1306, and Q1360–Q1395. Low complexity-rich tracts occupy residues Q1284–P1296 and Q1360–Q1376. T1406 carries the phosphothreonine modification. Disordered stretches follow at residues M1512–G1570 and P1659–S1685. Residue S1520 is modified to Phosphoserine. Residues T1605–M1896 are sufficient for interaction with AGO2. Residues N1716 to E1788 enclose the RRM domain. Phosphoserine occurs at positions 1804 and 1825.

The protein belongs to the GW182 family. In terms of assembly, interacts with AGO2. Interacts with AGO1, AGO3 and AGO4. Interacts with CNOT1; the interaction is direct and mediates the association with the CCR4-NOT complex. Interacts with ZC3H12A. Interacts with SND1. Interacts with GARRE1.

Its subcellular location is the cytoplasm. It localises to the P-body. Its function is as follows. Plays a role in RNA-mediated gene silencing by both micro-RNAs (miRNAs) and short interfering RNAs (siRNAs). Required for miRNA-dependent repression of translation and for siRNA-dependent endonucleolytic cleavage of complementary mRNAs by argonaute family proteins. As a scaffolding protein, associates with argonaute proteins bound to partially complementary mRNAs, and can simultaneously recruit CCR4-NOT and PAN deadenylase complexes. The polypeptide is Trinucleotide repeat-containing gene 6A protein (Tnrc6a) (Mus musculus (Mouse)).